Consider the following 229-residue polypeptide: Putative N-acetylmannosamine-6-phosphate 2-epimerase 2 (229 aa).

This sequence belongs to the NanE family.

It carries out the reaction an N-acyl-D-glucosamine 6-phosphate = an N-acyl-D-mannosamine 6-phosphate. The protein operates within amino-sugar metabolism; N-acetylneuraminate degradation; D-fructose 6-phosphate from N-acetylneuraminate: step 3/5. Converts N-acetylmannosamine-6-phosphate (ManNAc-6-P) to N-acetylglucosamine-6-phosphate (GlcNAc-6-P). The sequence is that of Putative N-acetylmannosamine-6-phosphate 2-epimerase 2 from Salmonella paratyphi A (strain ATCC 9150 / SARB42).